The primary structure comprises 144 residues: Grifin (144 aa).

Residues 5–133 (FEAFCAGGLA…EHRLAQVELA (129 aa)) enclose the Galectin domain. Ser138 is subject to Phosphoserine.

Homodimer.

The chain is Grifin (Grifin) from Mus musculus (Mouse).